A 253-amino-acid polypeptide reads, in one-letter code: Lys-63-specific deubiquitinase BRCC36 (253 aa).

In terms of domain architecture, MPN spans 9 to 145 (VELQTDVYMV…KEHEIFLNCF (137 aa)). 3 residues coordinate Zn(2+): H94, H96, and D107. Residues 94-107 (HSHPHITVCPSHVD) carry the JAMM motif motif. Residues 227-249 (EKRIALNKLRATHLQRQLQELQK) adopt a coiled-coil conformation.

Belongs to the peptidase M67A family. BRCC36 subfamily. In terms of assembly, component of the BRISC complex, at least composed of ABRAXAS2, BRCC3/BRCC36, BABAM2 and BABAM1/NBA1. Within the complex, interacts directly with ABRAXAS2. The heterodimer with ABRAXAS2 assembles into a heterotetramer. The BRISC complex binds polyubiquitin. Zn(2+) serves as cofactor.

It is found in the cytoplasm. Its subcellular location is the nucleus. The protein localises to the cytoskeleton. The protein resides in the spindle pole. In terms of biological role, metalloprotease that specifically cleaves 'Lys-63'-linked polyubiquitin chains, leaving the last ubiquitin chain attached to its substrates. Catalytic subunit of the BRISC complex; does not have activity by itself, but needs to be associated into a heterotetramer with ABRAXAS2 for minimal in vitro activity. Plays a role in regulating the onset of apoptosis via its role in modulating 'Lys-63'-linked ubiquitination of target proteins. Required for normal mitotic spindle assembly and microtubule attachment to kinetochores via its role in deubiquitinating spindle assembly factors. The chain is Lys-63-specific deubiquitinase BRCC36 from Camponotus floridanus (Florida carpenter ant).